The chain runs to 329 residues: Quinone oxidoreductase (329 aa).

Alanine 2 carries the N-acetylalanine modification. At lysine 23 the chain carries N6-acetyllysine. NADP(+) is bound by residues tyrosine 53, 158–161, glycine 181, histidine 200, asparagine 229, 246–249, and 269–271; these read SGGV, VGSR, and VAL. Serine 248 bears the Phosphoserine mark.

The protein belongs to the zinc-containing alcohol dehydrogenase family. Quinone oxidoreductase subfamily. In terms of assembly, homotetramer.

The protein localises to the cytoplasm. It catalyses the reaction 2 a quinone + NADPH + H(+) = 2 a 1,4-benzosemiquinone + NADP(+). In terms of biological role, does not have alcohol dehydrogenase activity. Binds NADP and acts through a one-electron transfer process. Orthoquinones, such as 1,2-naphthoquinone or 9,10-phenanthrenequinone, are the best substrates (in vitro). May act in the detoxification of xenobiotics. Interacts with (AU)-rich elements (ARE) in the 3'-UTR of target mRNA species and enhances their stability. NADPH binding interferes with mRNA binding. The protein is Quinone oxidoreductase (CRYZ) of Sus scrofa (Pig).